The chain runs to 358 residues: Probable branched-chain-amino-acid aminotransferase (358 aa).

K196 is modified (N6-(pyridoxal phosphate)lysine).

The protein belongs to the class-IV pyridoxal-phosphate-dependent aminotransferase family. Pyridoxal 5'-phosphate is required as a cofactor.

The catalysed reaction is L-leucine + 2-oxoglutarate = 4-methyl-2-oxopentanoate + L-glutamate. It carries out the reaction L-isoleucine + 2-oxoglutarate = (S)-3-methyl-2-oxopentanoate + L-glutamate. The enzyme catalyses L-valine + 2-oxoglutarate = 3-methyl-2-oxobutanoate + L-glutamate. Its pathway is amino-acid biosynthesis; L-isoleucine biosynthesis; L-isoleucine from 2-oxobutanoate: step 4/4. It functions in the pathway amino-acid biosynthesis; L-leucine biosynthesis; L-leucine from 3-methyl-2-oxobutanoate: step 4/4. The protein operates within amino-acid biosynthesis; L-valine biosynthesis; L-valine from pyruvate: step 4/4. Acts on leucine, isoleucine and valine. This chain is Probable branched-chain-amino-acid aminotransferase (ilvE), found in Staphylococcus aureus (strain N315).